Reading from the N-terminus, the 34-residue chain is Conotoxin S4.3 (34 aa).

Q1 is subject to Pyrrolidone carboxylic acid. E3 carries the post-translational modification 4-carboxyglutamate. S7 carries an O-linked (HexNAc...) serine glycan. O-linked (HexNAc...) threonine glycosylation occurs at T9. P17, P22, P31, and P32 each carry 4-hydroxyproline.

This sequence belongs to the conotoxin A superfamily. Post-translationally, contains 3 disulfide bonds. In terms of tissue distribution, expressed by the venom duct.

The protein resides in the secreted. Functionally, probable neurotoxin with ion channel inhibitor activity. In Conus striatus (Striated cone), this protein is Conotoxin S4.3.